The chain runs to 127 residues: Holo-[acyl-carrier-protein] synthase (127 aa).

Positions 9 and 58 each coordinate Mg(2+).

Belongs to the P-Pant transferase superfamily. AcpS family. Requires Mg(2+) as cofactor.

It localises to the cytoplasm. The catalysed reaction is apo-[ACP] + CoA = holo-[ACP] + adenosine 3',5'-bisphosphate + H(+). Its function is as follows. Transfers the 4'-phosphopantetheine moiety from coenzyme A to a Ser of acyl-carrier-protein. In Shewanella baltica (strain OS155 / ATCC BAA-1091), this protein is Holo-[acyl-carrier-protein] synthase.